Consider the following 232-residue polypeptide: Octanoyltransferase (232 aa).

The BPL/LPL catalytic domain maps to 32-219 (NIIYDTLILL…SFKVFNFSSY (188 aa)). Substrate is bound by residues 77-84 (RGGDITYH), 140-142 (AIG), and 153-155 (GFA). Residue cysteine 171 is the Acyl-thioester intermediate of the active site.

It belongs to the LipB family.

The protein localises to the cytoplasm. The catalysed reaction is octanoyl-[ACP] + L-lysyl-[protein] = N(6)-octanoyl-L-lysyl-[protein] + holo-[ACP] + H(+). It functions in the pathway protein modification; protein lipoylation via endogenous pathway; protein N(6)-(lipoyl)lysine from octanoyl-[acyl-carrier-protein]: step 1/2. Functionally, catalyzes the transfer of endogenously produced octanoic acid from octanoyl-acyl-carrier-protein onto the lipoyl domains of lipoate-dependent enzymes. Lipoyl-ACP can also act as a substrate although octanoyl-ACP is likely to be the physiological substrate. The protein is Octanoyltransferase of Dictyoglomus turgidum (strain DSM 6724 / Z-1310).